The chain runs to 1147 residues: MASSSSSPSSRRYDVFPSFSGVDVRKTFLSHLIEALDRRSINTFMDHGIVRSCIIADALITAIREARISIVIFSENYASSTWCLNELVEIHKCYKKGEQMVIPVFYGVDPSHVRKQIGGFGDVFKKTCEDKPEDQKQRWVKALTDISNLAGEDLRNGPTEAFMVKKIANDVSNKLFPLPKGFGDFVGIEDHIKAIKSILCLESKEARIMVGIWGQSGIGKSTIGRALFSQLSSQFHHRAFITYKSTSGSDVSGMKLSWEKELLSEILGQKDIKIDHFGVVEQRLKHKKVLILLDDVDNLEFLKTLVGKAEWFGSGSRIIVITQDKQLLKAHEIDLVYEVELPSQGLALKMISQYAFGKDSPPDDFKELAFEVAELVGSLPLGLSVLGSSLKGRDKDEWVKMMPRLRNDSDDKIEETLRVGYDRLNKKNRELFKCIACFFNGFKVSNVKELLEDDVGLTMLADKSLIRITPDGDIEMHNLLEKLGREIDRAKSKGNPAKRQFLTNFEDIQEVVTEKTGTETVLGIRVPPTVLFSTRPLLVINEESFKGMRNLQYLEIGHWSEIGLWSEIGLWSKIDLPQGLVYLPLKLKLLKWNYCPLKSLPSTFKAEYLVNLIMKYSKLEKLWEGTLPLGSLKKMDLGCSNNLKEIPDLSLAINLEELNLSKCESLVTLPSSIQNAIKLRTLYCSGVLLIDLKSLEGMCNLEYLSVDWSSMEGTQGLIYLPRKLKRLWWDYCPVKRLPSNFKAEYLVELRMENSDLEKLWDGTQPLGSLKEMYLHGSKYLKEIPDLSLAINLERLYLFGCESLVTLPSSIQNATKLINLDMRDCKKLESFPTDLNLESLEYLNLTGCPNLRNFPAIKMGCSYFEILQDRNEIEVEDCFWNKNLPAGLDYLDCLMRCMPCEFRPEYLTFLDVSGCKHEKLWEGIQSLGSLKRMDLSESENLTEIPDLSKATNLKRLYLNGCKSLVTLPSTIGNLHRLVRLEMKECTGLELLPTDVNLSSLIILDLSGCSSLRTFPLISTRIECLYLENTAIEEVPCCIEDLTRLSVLLMYCCQRLKNISPNIFRLTSLMVADFTDCRGVIKALSDATVVATMEDHVSCVPLSENIEYTCERFWDELYERNSRSIFSYKDEDGDVYWVNWDLMMMLMLI.

A TIR domain is found at 11–175 (RRYDVFPSFS…KIANDVSNKL (165 aa)). E86 is a catalytic residue. The NB-ARC domain maps to 189–446 (EDHIKAIKSI…CFFNGFKVSN (258 aa)). LRR repeat units lie at residues 548-573 (MRNL…LWSK), 584-606 (PLKL…TFKA), 608-629 (YLVN…TLPL), 630-653 (GSLK…SLAI), 655-676 (LEEL…IQNA), 698-721 (MCNL…IYLP), 722-743 (RKLK…NFKA), 744-766 (EYLV…TQPL), 767-790 (GSLK…SLAI), 792-813 (LERL…IQNA), 814-836 (TKLI…DLNL), 837-860 (ESLE…KMGC), 926-950 (LGSL…SKAT), 952-973 (LKRL…IGNL), 974-996 (HRLV…DVNL), 997-1017 (SSLI…PLIS), 1018-1042 (TRIE…DLTR), and 1044-1064 (SVLL…IFRL).

Interacts with RSH1.

The enzyme catalyses NAD(+) + H2O = ADP-D-ribose + nicotinamide + H(+). In terms of biological role, TIR-NB-LRR receptor-like protein that confers resistance to the pathogen Hyaloperonospora arabidopsis isolates Emoy2 and Emwa1 (downy mildew disease). Plays a role in the regulation of temperature response during plant growth and survival. This Arabidopsis thaliana (Mouse-ear cress) protein is Disease resistance protein RPP4.